A 692-amino-acid polypeptide reads, in one-letter code: Proprotein convertase subtilisin/kexin type 9 (692 aa).

Residues 1–30 form the signal peptide; it reads MGTVSSRRSWWPLPLLLLLLLLLGPAGARA. Residues 31 to 152 constitute a propeptide that is removed on maturation; the sequence is QEDEDGDYEE…IEEDSSVFAQ (122 aa). Y38 is subject to Sulfotyrosine. The residue at position 47 (S47) is a Phosphoserine. Positions 77-149 constitute an Inhibitor I9 domain; sequence TYVVVLKEET…VDYIEEDSSV (73 aa). The 307-residue stretch at 155-461 folds into the Peptidase S8 domain; sequence PWNLERITPP…GWQLFCRTVW (307 aa). Catalysis depends on charge relay system residues D186 and H226. 2 disulfide bridges follow: C223-C255 and C323-C358. The Charge relay system role is filled by S386. Residues 450–692 are C-terminal domain; sequence GAGWQLFCRT…HLAQASQELQ (243 aa). 3 disulfides stabilise this stretch: C457–C527, C477–C526, and C486–C509. The N-linked (GlcNAc...) asparagine glycan is linked to N533. 6 disulfides stabilise this stretch: C534/C601, C552/C600, C562/C588, C608/C679, C626/C678, and C635/C654. Phosphoserine is present on S688.

It belongs to the peptidase S8 family. Monomer. Can self-associate to form dimers and higher multimers which may have increased LDLR degrading activity. The precursor protein but not the mature protein may form multimers. Interacts with APOB, VLDLR, LRP8/APOER2 and BACE1. The full-length immature form (pro-PCSK9) interacts with SCNN1A, SCNN1B and SCNN1G. The pro-PCSK9 form (via C-terminal domain) interacts with LDLR. Interacts (via the C-terminal domain) with ANXA2 (via repeat Annexin 1); the interaction inhibits the degradation of LDLR. The cofactor is Ca(2+). Cleavage by furin and PCSK5 generates a truncated inactive protein that is unable to induce LDLR degradation. In terms of processing, undergoes autocatalytic cleavage in the endoplasmic reticulum to release the propeptide from the N-terminus and the cleavage of the propeptide is strictly required for its maturation and activation. The cleaved propeptide however remains associated with the catalytic domain through non-covalent interactions, preventing potential substrates from accessing its active site. As a result, it is secreted from cells as a propeptide-containing, enzymatically inactive protein. Post-translationally, phosphorylation protects the propeptide against proteolysis.

Its subcellular location is the cytoplasm. The protein localises to the secreted. It is found in the endosome. The protein resides in the lysosome. It localises to the cell surface. Its subcellular location is the endoplasmic reticulum. The protein localises to the golgi apparatus. Its activity is regulated as follows. Its proteolytic activity is autoinhibited by the non-covalent binding of the propeptide to the catalytic domain. Inhibited by EGTA. Functionally, crucial player in the regulation of plasma cholesterol homeostasis. Binds to low-density lipid receptor family members: low density lipoprotein receptor (LDLR), very low density lipoprotein receptor (VLDLR), apolipoprotein E receptor (LRP1/APOER) and apolipoprotein receptor 2 (LRP8/APOER2), and promotes their degradation in intracellular acidic compartments. Acts via a non-proteolytic mechanism to enhance the degradation of the hepatic LDLR through a clathrin LDLRAP1/ARH-mediated pathway. May prevent the recycling of LDLR from endosomes to the cell surface or direct it to lysosomes for degradation. Can induce ubiquitination of LDLR leading to its subsequent degradation. Inhibits intracellular degradation of APOB via the autophagosome/lysosome pathway in a LDLR-independent manner. Involved in the disposal of non-acetylated intermediates of BACE1 in the early secretory pathway. Inhibits epithelial Na(+) channel (ENaC)-mediated Na(+) absorption by reducing ENaC surface expression primarily by increasing its proteasomal degradation. Regulates neuronal apoptosis via modulation of LRP8/APOER2 levels and related anti-apoptotic signaling pathways. This is Proprotein convertase subtilisin/kexin type 9 (PCSK9) from Pan troglodytes (Chimpanzee).